Here is a 488-residue protein sequence, read N- to C-terminus: Malonate-semialdehyde dehydrogenase (488 aa).

7 residues coordinate NAD(+): alanine 150, phenylalanine 152, lysine 176, glutamate 179, arginine 180, serine 229, and threonine 251. The active-site Nucleophile is the cysteine 284. NAD(+) is bound at residue glutamate 382.

It belongs to the aldehyde dehydrogenase family. IolA subfamily. As to quaternary structure, homotetramer.

It carries out the reaction 3-oxopropanoate + NAD(+) + CoA + H2O = hydrogencarbonate + acetyl-CoA + NADH + H(+). The catalysed reaction is 2-methyl-3-oxopropanoate + NAD(+) + CoA + H2O = propanoyl-CoA + hydrogencarbonate + NADH + H(+). It participates in polyol metabolism; myo-inositol degradation into acetyl-CoA; acetyl-CoA from myo-inositol: step 7/7. Its function is as follows. Catalyzes the oxidation of malonate semialdehyde (MSA) and methylmalonate semialdehyde (MMSA) into acetyl-CoA and propanoyl-CoA, respectively. Is involved in a myo-inositol catabolic pathway. Bicarbonate, and not CO2, is the end-product of the enzymatic reaction. The chain is Malonate-semialdehyde dehydrogenase from Listeria monocytogenes serotype 4b (strain F2365).